A 61-amino-acid chain; its full sequence is Tryptophyllin-1 (61 aa).

The first 22 residues, 1 to 22 (MDILKKSLFLALFLGLVSISFC), serve as a signal peptide directing secretion. The propeptide occupies 23 to 53 (DEEKRQDDDESNESEEKKEIHEEGSQEERRE). The interval 24 to 61 (EEKRQDDDESNESEEKKEIHEEGSQEERREKPPPWVPV) is disordered. Residues 36–55 (SEEKKEIHEEGSQEERREKP) are compositionally biased toward basic and acidic residues.

Expressed by the skin glands.

It is found in the secreted. In terms of biological role, the synthetic peptide inhibits bradykinin-induced relaxation of rat tail artery smooth muscle, and also has anti-proliferative effects on the human prostate cancer cell lines LNCaP, PC3 and DU145. This chain is Tryptophyllin-1, found in Phyllomedusa sauvagei (Sauvage's leaf frog).